The chain runs to 404 residues: Deoxyguanosinetriphosphate triphosphohydrolase-like protein 1 (404 aa).

The region spanning Arg-75–Asn-219 is the HD domain.

Belongs to the dGTPase family. Type 2 subfamily.

This Mesorhizobium japonicum (strain LMG 29417 / CECT 9101 / MAFF 303099) (Mesorhizobium loti (strain MAFF 303099)) protein is Deoxyguanosinetriphosphate triphosphohydrolase-like protein 1.